A 712-amino-acid chain; its full sequence is BTB/POZ domain-containing protein 18 (712 aa).

The BTB domain occupies 34–102 (CDVLLQAEGE…LYTSEMEVSQ (69 aa)). 3 disordered regions span residues 157 to 176 (VTPS…PCPL), 212 to 355 (RACP…EGQV), and 374 to 410 (ETPL…QEMS). Polar residues predominate over residues 218–228 (QEKNSSPSSHS). Basic and acidic residues predominate over residues 229–238 (QEPRENKNDT). Residues 277 to 288 (SKPSSILSGSSS) show a composition bias toward low complexity. The segment covering 303-313 (VNKETPEDKPK) has biased composition (basic and acidic residues). Residues 396–410 (PSGTQPFSSNEQEMS) show a composition bias toward polar residues. Residues Ser-420, Ser-671, and Ser-672 each carry the phosphoserine modification. 2 disordered regions span residues 653–676 (KAGK…EEEE) and 691–712 (TTVP…DILT). The segment covering 702 to 712 (SESETEVDILT) has biased composition (acidic residues).

It localises to the nucleus. Functionally, specifically required during spermatogenesis to promote expression of piRNA precursors. The piRNA metabolic process mediates the repression of transposable elements during meiosis by forming complexes composed of piRNAs and Piwi proteins and governs the methylation and subsequent repression of transposons, which is essential for the germline integrity. Acts by facilitating transcription elongation at piRNA loci during pachytene. This chain is BTB/POZ domain-containing protein 18, found in Homo sapiens (Human).